Consider the following 377-residue polypeptide: Probable G-protein coupled receptor F27E5.8 (377 aa).

The Extracellular segment spans residues 1-34 (MSEQDSSSPKYMRFLLGNFTSAEMVTDGNFLIYC). The N-linked (GlcNAc...) asparagine glycan is linked to Asn-18. Residues 35 to 55 (IEMGLLVIGVLENIFMIGAVF) form a helical membrane-spanning segment. The Cytoplasmic segment spans residues 56–71 (STSCLHLNLRILICNC). Residues 72-92 (CLGFILMAVGRAMIAVPLCIA) form a helical membrane-spanning segment. Residues 93–105 (HLRDVDISSHAWC) are Extracellular-facing. The chain crosses the membrane as a helical span at residues 106 to 126 (FIANAVHHSSADSVCLSFVFI). The Cytoplasmic portion of the chain corresponds to 127–144 (MLERTAGTIWSKDYEKTK). The helical transmembrane segment at 145–165 (IHIFPCIFAFLQWFIPMFMIL) threads the bilayer. The Extracellular segment spans residues 166-195 (GNFLDRANRMEHFLLYPHLPCQIEYLTPTM). The helical transmembrane segment at 196–216 (FMITIFIIVIGFIASVGGITI) threads the bilayer. At 217–251 (VYNKNIKKYNTRDIWFNTVNLSERYQITENIRSTH) the chain is on the cytoplasmic side. Residues 252 to 272 (LLFPLLALMLIFSTLSVSVLI) form a helical membrane-spanning segment. Over 273–303 (YGGYWVSVMTKEPARFEEVVKWFGRGGEAAQ) the chain is Extracellular. Residues 304–324 (LFDIITAIYTISFPICAFICH) traverse the membrane as a helical segment. Over 325-377 (PNLFRFLRKFIGWNSYAVRPSNLNEIGGFEMSTAPIRTQTEFHFQELSRQWNT) the chain is Cytoplasmic.

The protein belongs to the G-protein coupled receptor 1 family.

Its subcellular location is the cell membrane. This Caenorhabditis elegans protein is Probable G-protein coupled receptor F27E5.8.